The following is a 329-amino-acid chain: Probable acyltransferase FabY (329 aa).

Positions 18 to 162 constitute an N-acetyltransferase domain; that stretch reads YHLRVPQTEE…RHFLMIKPVA (145 aa).

Belongs to the acetyltransferase family. FabY subfamily.

The protein operates within lipid metabolism; fatty acid biosynthesis. Its function is as follows. Supports initiation of fatty acid biosynthesis in the absence of FabH. In Escherichia coli O157:H7, this protein is Probable acyltransferase FabY.